The chain runs to 226 residues: MGKGRGRHPSRLKVKPPEPEILAKYLHHWNTKELYHHPDTFLQVSSPSFFQNENPLEIDIGCATGDLVCSLAQKNPQVNFIGVEVSMKPLYRAIKYSVREQIENVRFIKTDFRLLYPLLPDASVQKIFFHFPVPVVRAKDSKYLIFSEDFLSEMHRALQVGGMISVISDSAEYFPIMRELGQNDTRYELISDEAKCMALEPDEKSYYHKYWDAQGREKFRFILVKK.

The S-adenosyl-L-methionine site is built by Asp59, Glu84, and Asp111. Asp169 provides a ligand contact to substrate.

It belongs to the class I-like SAM-binding methyltransferase superfamily. TrmB family.

It catalyses the reaction guanosine(46) in tRNA + S-adenosyl-L-methionine = N(7)-methylguanosine(46) in tRNA + S-adenosyl-L-homocysteine. Its pathway is tRNA modification; N(7)-methylguanine-tRNA biosynthesis. Its function is as follows. Catalyzes the formation of N(7)-methylguanine at position 46 (m7G46) in tRNA. In Chloroherpeton thalassium (strain ATCC 35110 / GB-78), this protein is tRNA (guanine-N(7)-)-methyltransferase.